The following is a 160-amino-acid chain: Cytochrome b6-f complex subunit 4 (160 aa).

3 helical membrane passes run 36–56 (LLYVFPVVILGTIGLVTALAV), 95–115 (LLGIACQAAIPLGLMLVPFIE), and 131–151 (AVFLFGTVVTLWLGAGATFPI).

This sequence belongs to the cytochrome b family. PetD subfamily. As to quaternary structure, the 4 large subunits of the cytochrome b6-f complex are cytochrome b6, subunit IV (17 kDa polypeptide, PetD), cytochrome f and the Rieske protein, while the 4 small subunits are PetG, PetL, PetM and PetN. The complex functions as a dimer.

The protein localises to the cellular thylakoid membrane. Component of the cytochrome b6-f complex, which mediates electron transfer between photosystem II (PSII) and photosystem I (PSI), cyclic electron flow around PSI, and state transitions. The protein is Cytochrome b6-f complex subunit 4 of Rippkaea orientalis (strain PCC 8801 / RF-1) (Cyanothece sp. (strain PCC 8801)).